Here is a 320-residue protein sequence, read N- to C-terminus: Porphobilinogen deaminase (320 aa).

Cys241 is subject to S-(dipyrrolylmethanemethyl)cysteine.

The protein belongs to the HMBS family. Monomer. Requires dipyrromethane as cofactor.

The catalysed reaction is 4 porphobilinogen + H2O = hydroxymethylbilane + 4 NH4(+). Its pathway is porphyrin-containing compound metabolism; protoporphyrin-IX biosynthesis; coproporphyrinogen-III from 5-aminolevulinate: step 2/4. Its function is as follows. Tetrapolymerization of the monopyrrole PBG into the hydroxymethylbilane pre-uroporphyrinogen in several discrete steps. This Thermobifida fusca (strain YX) protein is Porphobilinogen deaminase.